The following is a 523-amino-acid chain: Calcium and calcium/calmodulin-dependent serine/threonine-protein kinase DMI-3 (523 aa).

The region spanning 12–306 (YEVSEILGRG…ALELLSDPWV (295 aa)) is the Protein kinase domain. Residues 18–26 (LGRGGFSVV) and K47 contribute to the ATP site. The active-site Proton acceptor is D171. The residue at position 271 (T271) is a Phosphothreonine. Positions 329–342 (ARRKLRAAAIASVW) are calmodulin-binding. EF-hand domains lie at 400 to 435 (SLIP…LKNS), 436 to 471 (KGED…LPYD), and 478 to 513 (TEPG…DSSL). Residues D413, N415, D417, T419, E424, D449, D451, S453, C455, E460, D491, N493, D495, K497, and E502 each contribute to the Ca(2+) site.

Belongs to the protein kinase superfamily. CAMK Ser/Thr protein kinase family. CaMK subfamily. As to quaternary structure, interacts with IPD3. Autophosphorylation. In terms of tissue distribution, highly expressed in roots. Expressed in root hairs and nodules. Expressed at low levels in flowers. Not detected in leaves or stems.

Its subcellular location is the nucleus. It catalyses the reaction L-seryl-[protein] + ATP = O-phospho-L-seryl-[protein] + ADP + H(+). It carries out the reaction L-threonyl-[protein] + ATP = O-phospho-L-threonyl-[protein] + ADP + H(+). Its activity is regulated as follows. Activated by calcium. Autophosphorylation may play an important role in the regulation of the kinase activity. Its function is as follows. During nodulation, plays a central role in bacterial infection and contributes to nodule organogenesis. Protein kinase that recognizes the calcium spiking induced by Nod factors and translates this signal to components controlling nodulation and mycorrhizal infection responses. May phosphorylate the NSP1 protein. Required in epidermal and cortical cells to promote infection thread (IT) formation in root hairs. This Medicago truncatula (Barrel medic) protein is Calcium and calcium/calmodulin-dependent serine/threonine-protein kinase DMI-3.